Here is a 66-residue protein sequence, read N- to C-terminus: Large ribosomal subunit protein bL33c (66 aa).

It belongs to the bacterial ribosomal protein bL33 family.

It localises to the plastid. The protein resides in the chloroplast. This Dioscorea elephantipes (Elephant's foot yam) protein is Large ribosomal subunit protein bL33c.